The primary structure comprises 217 residues: Thymidylate kinase (217 aa).

7 to 14 (GIDGAGKS) provides a ligand contact to ATP.

It belongs to the thymidylate kinase family.

It carries out the reaction dTMP + ATP = dTDP + ADP. Phosphorylation of dTMP to form dTDP in both de novo and salvage pathways of dTTP synthesis. This Pelodictyon phaeoclathratiforme (strain DSM 5477 / BU-1) protein is Thymidylate kinase.